The sequence spans 2327 residues: Nonribosomal peptide synthetase apmB (2327 aa).

The interval 214–605 is adenylation 1; the sequence is DTQAKSRPDS…GRKDMQIKLR (392 aa). Residues 734–810 form the Carrier 1 domain; it reads EPATATGKVL…EMADACTKVI (77 aa). At serine 771 the chain carries O-(pantetheine 4'-phosphoryl)serine. The interval 845–1259 is condensation 1; that stretch reads EDLYPCTAMQ…IFISSKDQES (415 aa). The interval 1281-1675 is adenylation 2; the sequence is ERIAERPDHE…RRKDTQVKLR (395 aa). Residues 1816–1892 form the Carrier 2 domain; the sequence is PPTTDMQITM…AISAVAETLS (77 aa). Residue serine 1853 is modified to O-(pantetheine 4'-phosphoryl)serine. A condensation 2 region spans residues 1937 to 2260; that stretch reads TDFQSLAING…VFQYQDFGGE (324 aa). Residues 2299–2327 are disordered; it reads RVDLPRRPSPAGDTRDGPTAASDSPSRAR.

This sequence belongs to the NRP synthetase family.

It carries out the reaction N-benzoyl-L-phenylalaninol + benzoate + L-phenylalanine + 2 ATP = asperphenamate + 2 AMP + 2 diphosphate + H(+). It participates in secondary metabolite biosynthesis. Nonribosomal peptide synthetase; part of the gene cluster that mediates the biosynthesis of asperphenamate, a rare linear amino acid ester that exhibits antitumor activity towards a number of cell lines. The structure of asperphenamate contains two subunits, N-benzoylphenylalanine and N-benzoylphenylalaninol, which are connected by an inter-molecular ester bond. The first step of asperphenamate biosynthesis is the generation of N-benzoylphenylalaninol by the nonribosomal peptide synthase apmA. Using phenylalanine and benzoic acid as substrates, apmA catalyzes amide bond formation and tethers the intermediate into the NRPS chain. Then, the terminal R domain of apmA catalyzes the reduction reaction to get the shunt product N-benzoylphenylalaninol. Subsequently, the nonribosomal peptide synthase apmB activates the same substrates as does apmA (phenylalanine and benzoic acid) to produce N-benzoylphenylalanine before condensing N-benzoylphenylalanine and N-benzoylphenylalaninol to release asperphenamate. This Penicillium brevicompactum protein is Nonribosomal peptide synthetase apmB.